We begin with the raw amino-acid sequence, 287 residues long: 4-hydroxybenzoate octaprenyltransferase (287 aa).

Transmembrane regions (helical) follow at residues 19–39 (PIGT…ASSG), 43–63 (LQML…GCAI), 94–114 (VVVA…LNIF), 118–138 (LSVL…FLAI), 142–162 (VLGI…LDFI), 167–187 (WVLF…YAMV), 209–229 (VLAI…VAHL), 235–255 (YFLI…KLVS), and 263–283 (FLAF…IVLG).

The protein belongs to the UbiA prenyltransferase family. Mg(2+) is required as a cofactor.

The protein localises to the cell inner membrane. It carries out the reaction all-trans-octaprenyl diphosphate + 4-hydroxybenzoate = 4-hydroxy-3-(all-trans-octaprenyl)benzoate + diphosphate. It functions in the pathway cofactor biosynthesis; ubiquinone biosynthesis. In terms of biological role, catalyzes the prenylation of para-hydroxybenzoate (PHB) with an all-trans polyprenyl group. Mediates the second step in the final reaction sequence of ubiquinone-8 (UQ-8) biosynthesis, which is the condensation of the polyisoprenoid side chain with PHB, generating the first membrane-bound Q intermediate 3-octaprenyl-4-hydroxybenzoate. This Polynucleobacter asymbioticus (strain DSM 18221 / CIP 109841 / QLW-P1DMWA-1) (Polynucleobacter necessarius subsp. asymbioticus) protein is 4-hydroxybenzoate octaprenyltransferase.